A 129-amino-acid polypeptide reads, in one-letter code: Virion-associated protein (129 aa).

2 coiled-coil regions span residues 1-31 (MANL…ILEL) and 38-59 (IKES…LIND). The tract at residues 122–129 (PAGWPNQY) is capsid binding.

The protein belongs to the caulimovirus ORF III family. In terms of assembly, homotetramer, through coiled-coil domain. Homotrimer when interacts with icosehadral capsid. Interacts with capsid protein, and with Movement protein.

It is found in the virion. The protein resides in the host cell junction. The protein localises to the host plasmodesma. Its function is as follows. Plays a role in virus cell-to-cell and plant-to-plant transmission. Interacts with virion icosahedral capsid and movement protein, thereby facilitating virion cell-to-cell transmission through plasmodesmata opened by viral movement protein. Also interacts with aphid transmission factor, attaching the virion to aphid stylet when the animal feeds on an virus infected plant. Aphid saliva may later detach the virion, inducing release of infectious particles when the animal feeds on a new plant. The protein is Virion-associated protein of Cauliflower mosaic virus (strain D/H) (CaMV).